The sequence spans 229 residues: Biosynthetic peptidoglycan transglycosylase (229 aa).

The helical transmembrane segment at 11 to 31 threads the bilayer; sequence NLLLALFLVLVAGPVVAVILY.

This sequence belongs to the glycosyltransferase 51 family.

The protein resides in the cell inner membrane. It carries out the reaction [GlcNAc-(1-&gt;4)-Mur2Ac(oyl-L-Ala-gamma-D-Glu-L-Lys-D-Ala-D-Ala)](n)-di-trans,octa-cis-undecaprenyl diphosphate + beta-D-GlcNAc-(1-&gt;4)-Mur2Ac(oyl-L-Ala-gamma-D-Glu-L-Lys-D-Ala-D-Ala)-di-trans,octa-cis-undecaprenyl diphosphate = [GlcNAc-(1-&gt;4)-Mur2Ac(oyl-L-Ala-gamma-D-Glu-L-Lys-D-Ala-D-Ala)](n+1)-di-trans,octa-cis-undecaprenyl diphosphate + di-trans,octa-cis-undecaprenyl diphosphate + H(+). It functions in the pathway cell wall biogenesis; peptidoglycan biosynthesis. Functionally, peptidoglycan polymerase that catalyzes glycan chain elongation from lipid-linked precursors. This is Biosynthetic peptidoglycan transglycosylase from Caulobacter vibrioides (strain ATCC 19089 / CIP 103742 / CB 15) (Caulobacter crescentus).